The primary structure comprises 244 residues: Venom nerve growth factor (244 aa).

The signal sequence occupies residues 1 to 18 (MSMLCYTLIIAFLIGIWA). The propeptide occupies 19-125 (APKSEDNVSL…SLNRNIRAKR (107 aa)). Disulfide bonds link Cys-139–Cys-204, Cys-182–Cys-232, and Cys-192–Cys-234. Asn-148 carries an N-linked (GlcNAc...) asparagine glycan.

Belongs to the NGF-beta family. In terms of assembly, homodimer; non-covalently linked. In terms of processing, N-glycosylated. Expressed by the venom gland.

Its subcellular location is the secreted. Functionally, nerve growth factor is important for the development and maintenance of the sympathetic and sensory nervous systems. It stimulates division and differentiation of sympathetic and embryonic sensory neurons as well as basal forebrain cholinergic neurons in the brain. Its relevance in the snake venom is not clear. However, it has been shown to inhibit metalloproteinase-dependent proteolysis of platelet glycoprotein Ib alpha, suggesting a metalloproteinase inhibition to prevent metalloprotease autodigestion and/or protection against prey proteases. Binds a lipid between the two protein chains in the homodimer. The lipid-bound form promotes histamine relase from mouse mast cells, contrary to the lipid-free form. It promotes neurite outgrowth in rat PC12 pheochromocytoma cells. The polypeptide is Venom nerve growth factor (Macrovipera lebetinus (Levantine viper)).